A 513-amino-acid chain; its full sequence is Tryptophan--tRNA ligase 1 (513 aa).

The 'HIGH' region motif lies at 86-94 (PTGDPHIGH). The 'KMSKS' region signature appears at 393-397 (KMSSS).

It belongs to the class-I aminoacyl-tRNA synthetase family.

The protein resides in the cytoplasm. The catalysed reaction is tRNA(Trp) + L-tryptophan + ATP = L-tryptophyl-tRNA(Trp) + AMP + diphosphate + H(+). The chain is Tryptophan--tRNA ligase 1 from Halobacterium salinarum (strain ATCC 700922 / JCM 11081 / NRC-1) (Halobacterium halobium).